Consider the following 285-residue polypeptide: uncharacterized protein (285 aa).

The HTH araC/xylS-type domain occupies 184-282; it reads HSICNWVQDN…GLTPGEYSAR (99 aa). 2 consecutive DNA-binding regions (H-T-H motif) follow at residues 201–222 and 249–272; these read ESVA…AQHG and IHEV…RRQF.

This is an uncharacterized protein from Escherichia coli (strain K12).